Consider the following 172-residue polypeptide: Translationally-controlled tumor protein homolog (172 aa).

One can recognise a TCTP domain in the interval 1-172 (MIIFKDLLTG…FKHGLDEEKV (172 aa)).

The protein belongs to the TCTP family. As to expression, expressed by the venom gland.

It localises to the secreted. Functionally, venom protein that causes edema, enhances vascular permeability and is likely related to the inflammatory activity of the venom. The sequence is that of Translationally-controlled tumor protein homolog from Loxosceles intermedia (Brown spider).